A 218-amino-acid chain; its full sequence is UPF0598 protein C8orf82 homolog (218 aa).

It belongs to the UPF0598 family.

In Mus musculus (Mouse), this protein is UPF0598 protein C8orf82 homolog.